The primary structure comprises 1007 residues: SUPPRESSOR OF ABI3-5 (1007 aa).

Disordered stretches follow at residues 1–185 and 204–269; these read MDPS…RDRE and ESPH…FSAT. Composition is skewed to basic and acidic residues over residues 40 to 49, 94 to 120, 138 to 185, and 204 to 214; these read PDERLMRDDV, YYHD…RYDG, HSRD…RDRE, and ESPHKRYEKSR. Basic residues predominate over residues 227 to 236; sequence RSPRGRSHGR. The span at 237-264 shows a compositional bias: basic and acidic residues; that stretch reads SYREDSYEGDHWNESERRREYEDRHNQD. One can recognise an RRM 1 domain in the interval 272–352; sequence ATVVVKGLSM…RKLMFHYSQP (81 aa). The RanBP2-type zinc-finger motif lies at 378-407; sequence VPTDWICTICGCINFARRTSCFQCNEPKTK. The region spanning 432-512 is the RRM 2 domain; the sequence is HVLVVRGLDE…KILRVAYAKS (81 aa). Disordered stretches follow at residues 556 to 581, 631 to 656, 725 to 755, 771 to 797, 810 to 910, and 945 to 977; these read GEKQ…SAPQ, PDQN…SQQK, HETQ…STGQ, STSN…TLMG, ASSS…GITT, and SGLG…KKVD. Residues 631–645 are compositionally biased toward polar residues; sequence PDQNNESKVTENQPD. Composition is skewed to low complexity over residues 778–793 and 823–835; these read SALT…TTGG and PSAS…VSGS. A compositionally biased stretch (basic and acidic residues) spans 849–867; it reads THREQPQTSYRDRAAERRN. Residues 928–974 form the G-patch domain; the sequence is ESNVGNRMLRNMGWHEGSGLGKDGSGMKEPVQAQGVDRRAGLGSQQK.

Interacts with the pre-spliceosomal component U2AF65A. Ubiquitous with highest expression in siliques toward the end of seed maturation.

It is found in the nucleus. Its function is as follows. Splicing factor that controls alternative splicing of the developmental regulator ABI3. Reduces splicing of a cryptic intron in ABI3, leading to a decreased in ABI3-beta transcript. Regulates the splicing of the receptor-like kinase SNC4/LRKL-2.6. This is SUPPRESSOR OF ABI3-5 from Arabidopsis thaliana (Mouse-ear cress).